A 522-amino-acid polypeptide reads, in one-letter code: Peptide methionine sulfoxide reductase MsrA/MsrB (522 aa).

Residues Leu17 to Ala174 form the Thioredoxin domain. Residues Cys68 and Cys71 are joined by a disulfide bond. The interval Arg199–Arg354 is peptide methionine sulfoxide reductase A. Cys207 is a catalytic residue. The region spanning Asp383–Leu506 is the MsrB domain. Residues Cys440 and Cys495 are joined by a disulfide bond. Cys495 (nucleophile) is an active-site residue.

The protein in the N-terminal section; belongs to the thioredoxin family. In the central section; belongs to the MsrA Met sulfoxide reductase family. This sequence in the C-terminal section; belongs to the MsrB Met sulfoxide reductase family.

The catalysed reaction is L-methionyl-[protein] + [thioredoxin]-disulfide + H2O = L-methionyl-(S)-S-oxide-[protein] + [thioredoxin]-dithiol. The enzyme catalyses [thioredoxin]-disulfide + L-methionine + H2O = L-methionine (S)-S-oxide + [thioredoxin]-dithiol. It carries out the reaction L-methionyl-[protein] + [thioredoxin]-disulfide + H2O = L-methionyl-(R)-S-oxide-[protein] + [thioredoxin]-dithiol. In terms of biological role, has an important function as a repair enzyme for proteins that have been inactivated by oxidation. Catalyzes the reversible oxidation-reduction of methionine sulfoxide in proteins to methionine. In Neisseria gonorrhoeae, this protein is Peptide methionine sulfoxide reductase MsrA/MsrB (msrAB).